The chain runs to 413 residues: Multifunctional CCA protein (413 aa).

The ATP site is built by G8 and R11. CTP-binding residues include G8 and R11. Residues D21 and D23 each contribute to the Mg(2+) site. Residues R91, R137, and R140 each contribute to the ATP site. CTP-binding residues include R91, R137, and R140. In terms of domain architecture, HD spans 228–329 (TGIHTLMVLA…IKIFDKADLW (102 aa)).

Belongs to the tRNA nucleotidyltransferase/poly(A) polymerase family. Bacterial CCA-adding enzyme type 1 subfamily. As to quaternary structure, monomer. Can also form homodimers and oligomers. Mg(2+) is required as a cofactor. It depends on Ni(2+) as a cofactor.

It catalyses the reaction a tRNA precursor + 2 CTP + ATP = a tRNA with a 3' CCA end + 3 diphosphate. It carries out the reaction a tRNA with a 3' CCA end + 2 CTP + ATP = a tRNA with a 3' CCACCA end + 3 diphosphate. Its function is as follows. Catalyzes the addition and repair of the essential 3'-terminal CCA sequence in tRNAs without using a nucleic acid template. Adds these three nucleotides in the order of C, C, and A to the tRNA nucleotide-73, using CTP and ATP as substrates and producing inorganic pyrophosphate. tRNA 3'-terminal CCA addition is required both for tRNA processing and repair. Also involved in tRNA surveillance by mediating tandem CCA addition to generate a CCACCA at the 3' terminus of unstable tRNAs. While stable tRNAs receive only 3'-terminal CCA, unstable tRNAs are marked with CCACCA and rapidly degraded. The chain is Multifunctional CCA protein from Shewanella woodyi (strain ATCC 51908 / MS32).